We begin with the raw amino-acid sequence, 627 residues long: Protein fem-1 homolog B (627 aa).

ANK repeat units follow at residues 45-74 (QRST…VQTQ), 87-116 (DGAT…NVNH), 120-149 (TNST…NISI), and 153-182 (YDNT…DPNA). Residues histidine 185, cysteine 186, and histidine 218 each contribute to the Zn(2+) site. ANK repeat units lie at residues 186–215 (CGAT…AIVV) and 218–248 (HGMT…DRRS). Residues 344-377 (SHPIIYRGAVYADNMEFEQCIKLWLHALHLRQKG) form a TPR repeat. ANK repeat units lie at residues 483-527 (EGFT…EVNA) and 531-568 (EGNS…HTDM).

It belongs to the fem-1 family. Component of a CRL2 E3 ubiquitin-protein ligase complex, also named ECS (Elongin BC-CUL2/5-SOCS-box protein) complex, composed of CUL2, Elongin BC (ELOB and ELOC), RBX1 and substrate-specific adapter FEM1B. Homooligomer. Interacts with PPM1F and PHTF1. Interacts with the death domain of FAS/TNFRSF6 and TNFRSF1A. Interacts with CHEK1. Interacts with NKX3-1. As to expression, widely expressed. Highly expressed in testis. Weakly expressed in other tissues.

The protein localises to the cytoplasm. The protein resides in the nucleus. The protein operates within protein modification; protein ubiquitination. Its activity is regulated as follows. Activity of the CRL2(FEM1B) complex toward FNIP1 is inhibited by BEX family proteins (BEX1, BEX2, BEX3, BEX4 and/or BEX5) in absence of reductive stress. Mechanistically, BEX proteins act as pseudosubstrate inhibitors that associate with FEM1B via zinc in absence of reductive stress, thereby preventing association between FEM1B and FNIP1. Its function is as follows. Substrate-recognition component of a Cul2-RING (CRL2) E3 ubiquitin-protein ligase complex of the DesCEND (destruction via C-end degrons) pathway, which recognizes a C-degron located at the extreme C terminus of target proteins, leading to their ubiquitination and degradation. The C-degron recognized by the DesCEND pathway is usually a motif of less than ten residues and can be present in full-length proteins, truncated proteins or proteolytically cleaved forms. The CRL2(FEM1B) complex specifically recognizes proteins ending with -Gly-Leu-Asp-Arg, such as CDK5R1, leading to their ubiquitination and degradation. Also acts as a regulator of the reductive stress response by mediating ubiquitination of reduced FNIP1: in response to reductive stress, the CRL2(FEM1B) complex specifically recognizes a conserved Cys degron in FNIP1 when this degron is reduced, leading to FNIP1 degradation and subsequent activation of mitochondria to recalibrate reactive oxygen species (ROS). Mechanistically, recognizes and binds reduced FNIP1 through two interface zinc ions, which act as a molecular glue that recruit reduced FNIP1 to FEM1B. Promotes ubiquitination of GLI1, suppressing GLI1 transcriptional activator activity. Promotes ubiquitination and degradation of ANKRD37. Promotes ubiquitination and degradation of SLBP. Involved in apoptosis by acting as a death receptor-associated protein that mediates apoptosis. Also involved in glucose homeostasis in pancreatic islet. May also act as an adapter/mediator in replication stress-induced signaling that leads to the activation of CHEK1. The polypeptide is Protein fem-1 homolog B (Homo sapiens (Human)).